A 273-amino-acid chain; its full sequence is NH(3)-dependent NAD(+) synthetase (273 aa).

Residue 47 to 54 coordinates ATP; sequence GISGGQDS. Aspartate 53 provides a ligand contact to Mg(2+). Arginine 139 provides a ligand contact to deamido-NAD(+). Residue threonine 159 participates in ATP binding. Glutamate 164 contributes to the Mg(2+) binding site. Lysine 172 and aspartate 179 together coordinate deamido-NAD(+). ATP is bound by residues lysine 188 and threonine 210. 259–260 contacts deamido-NAD(+); sequence HK.

It belongs to the NAD synthetase family. Homodimer.

It catalyses the reaction deamido-NAD(+) + NH4(+) + ATP = AMP + diphosphate + NAD(+) + H(+). It functions in the pathway cofactor biosynthesis; NAD(+) biosynthesis; NAD(+) from deamido-NAD(+) (ammonia route): step 1/1. Functionally, catalyzes the ATP-dependent amidation of deamido-NAD to form NAD. Uses ammonia as a nitrogen source. The polypeptide is NH(3)-dependent NAD(+) synthetase (Staphylococcus saprophyticus subsp. saprophyticus (strain ATCC 15305 / DSM 20229 / NCIMB 8711 / NCTC 7292 / S-41)).